The chain runs to 51 residues: ATP synthase F(1) complex subunit epsilon, mitochondrial (51 aa).

Residues Lys21, Lys32, and Lys37 each carry the N6-acetyllysine; alternate modification. 3 positions are modified to N6-succinyllysine; alternate: Lys21, Lys32, and Lys37. The residue at position 44 (Lys44) is an N6-acetyllysine.

Belongs to the eukaryotic ATPase epsilon family. As to quaternary structure, component of the ATP synthase complex composed at least of ATP5F1A/subunit alpha, ATP5F1B/subunit beta, ATP5MC1/subunit c (homooctomer), MT-ATP6/subunit a, MT-ATP8/subunit 8, ATP5ME/subunit e, ATP5MF/subunit f, ATP5MG/subunit g, ATP5MK/subunit k, ATP5MJ/subunit j, ATP5F1C/subunit gamma, ATP5F1D/subunit delta, ATP5F1E/subunit epsilon, ATP5PF/subunit F6, ATP5PB/subunit b, ATP5PD/subunit d, ATP5PO/subunit OSCP. ATP synthase complex consists of a soluble F(1) head domain (subunits alpha(3) and beta(3)) - the catalytic core - and a membrane F(0) domain - the membrane proton channel (subunits c, a, 8, e, f, g, k and j). These two domains are linked by a central stalk (subunits gamma, delta, and epsilon) rotating inside the F1 region and a stationary peripheral stalk (subunits F6, b, d, and OSCP).

Its subcellular location is the mitochondrion. The protein localises to the mitochondrion inner membrane. In terms of biological role, subunit epsilon, of the mitochondrial membrane ATP synthase complex (F(1)F(0) ATP synthase or Complex V) that produces ATP from ADP in the presence of a proton gradient across the membrane which is generated by electron transport complexes of the respiratory chain. ATP synthase complex consist of a soluble F(1) head domain - the catalytic core - and a membrane F(1) domain - the membrane proton channel. These two domains are linked by a central stalk rotating inside the F(1) region and a stationary peripheral stalk. During catalysis, ATP synthesis in the catalytic domain of F(1) is coupled via a rotary mechanism of the central stalk subunits to proton translocation. In vivo, can only synthesize ATP although its ATP hydrolase activity can be activated artificially in vitro. May be essential for the assembly of F(1) and may play an important role in the incorporation of the hydrophobic subunit c into the F(1)-c oligomer rotor of the mitochondrial ATP synthase complex. The sequence is that of ATP synthase F(1) complex subunit epsilon, mitochondrial from Bos taurus (Bovine).